Consider the following 163-residue polypeptide: Staphylokinase (163 aa).

A signal peptide spans 1–27 (MLKRGLLFLTVLLLLFSFSSITNEVSA).

Belongs to the staphylokinase family.

The protein resides in the secreted. Its function is as follows. Potent plasminogen activator that converts plasminogen into plasmin. It forms a 1:1 complex with plasmin, which in turn activates other plasminogen molecules. This Staphylococcus aureus (strain MRSA252) protein is Staphylokinase (sak).